Consider the following 379-residue polypeptide: Cytochrome b (379 aa).

Transmembrane regions (helical) follow at residues 33 to 53 (FGSLLGLCLIVQTLTGLFLAM), 77 to 98 (WLIRNLHANGASMFFICLYLHI), 113 to 133 (WNIGVVLLLLVMAAAFVGYVL), and 178 to 198 (FFTFHFLLPFTIIALTMLHLL). Heme b contacts are provided by His-83 and His-97. The heme b site is built by His-182 and His-196. His-201 lines the a ubiquinone pocket. The next 4 membrane-spanning stretches (helical) occupy residues 226 to 246 (YKDLLGATLMITTLLTLVLFS), 288 to 308 (LGGVLALLFSILILMIVPLLH), 320 to 340 (FSQTLFWLLISNVLILTWIGG), and 347 to 367 (FIIIGQLASVTYFTLFLVVMP).

The protein belongs to the cytochrome b family. The cytochrome bc1 complex contains 3 respiratory subunits (MT-CYB, CYC1 and UQCRFS1), 2 core proteins (UQCRC1 and UQCRC2) and probably 6 low-molecular weight proteins. Heme b serves as cofactor.

Its subcellular location is the mitochondrion inner membrane. Component of the ubiquinol-cytochrome c reductase complex (complex III or cytochrome b-c1 complex) that is part of the mitochondrial respiratory chain. The b-c1 complex mediates electron transfer from ubiquinol to cytochrome c. Contributes to the generation of a proton gradient across the mitochondrial membrane that is then used for ATP synthesis. The sequence is that of Cytochrome b (MT-CYB) from Iguana iguana (Common iguana).